The chain runs to 307 residues: Carbamate kinase (307 aa).

The protein belongs to the carbamate kinase family.

It is found in the cytoplasm. The enzyme catalyses hydrogencarbonate + NH4(+) + ATP = carbamoyl phosphate + ADP + H2O + H(+). Its pathway is metabolic intermediate metabolism; carbamoyl phosphate degradation; CO(2) and NH(3) from carbamoyl phosphate: step 1/1. Its function is as follows. Carbamate kinase involved in the arginine deiminase pathway of fermentative arginine utilization. This chain is Carbamate kinase (arcC), found in Halobacterium salinarum (strain ATCC 700922 / JCM 11081 / NRC-1) (Halobacterium halobium).